Here is a 1198-residue protein sequence, read N- to C-terminus: Fibronectin type-III domain-containing protein 3A (1198 aa).

Positions 188–201 (KKLKDRQGTQKDKM) are enriched in basic and acidic residues. Residues 188-257 (KKLKDRQGTQ…VDPEMEEKDE (70 aa)) form a disordered region. S203, S207, and S213 each carry phosphoserine. 9 Fibronectin type-III domains span residues 268–369 (NIVK…TLSC), 373–465 (PPNA…TSGC), 469–562 (VPAS…TCPD), 566–660 (VPVK…TPAV), 664–757 (PCLP…TAPG), 761–851 (QCRP…TPPS), 863–950 (SDDD…TKPL), 951–1045 (PPDP…TPKS), and 1049–1151 (ALKA…TEPP). Position 384 is an N6-acetyllysine (K384). The helical transmembrane segment at 1177–1197 (ILVVFAFFSILIAFIIQYFVI) threads the bilayer.

Belongs to the FNDC3 family. As to expression, testis. Localizes to the acrosome of spermatids, as well as to Leydig cells. Can be detected on the acrosome beginning at steps 2-3 and continuing until step 12 of spermiogenesis.

It is found in the golgi apparatus membrane. Functionally, mediates spermatid-Sertoli adhesion during spermatogenesis. The sequence is that of Fibronectin type-III domain-containing protein 3A (Fndc3a) from Mus musculus (Mouse).